The primary structure comprises 1050 residues: DNA ligase 4 (1050 aa).

Residues 1–22 (MNTNRRSRSPDEEALEEDQHQY) form a disordered region. ATP contacts are provided by glutamate 329, lysine 331, leucine 332, arginine 336, glutamate 398, phenylalanine 438, glutamate 498, lysine 503, lysine 520, and lysine 522. The N6-AMP-lysine intermediate role is filled by lysine 331. Glutamate 398 provides a ligand contact to Mg(2+). Mg(2+) is bound at residue glutamate 498. A compositionally biased stretch (basic and acidic residues) spans 691–702 (QEQERKKMEMEN). The interval 691-711 (QEQERKKMEMENRKRKPATKR) is disordered. 2 BRCT domains span residues 742–840 (ASKR…KENK) and 936–1049 (LRSF…EYVA).

This sequence belongs to the ATP-dependent DNA ligase family. Requires Mg(2+) as cofactor.

The protein resides in the nucleus. It carries out the reaction ATP + (deoxyribonucleotide)n-3'-hydroxyl + 5'-phospho-(deoxyribonucleotide)m = (deoxyribonucleotide)n+m + AMP + diphosphate.. Its function is as follows. DNA ligase involved in DNA non-homologous end joining (NHEJ); required for double-strand break (DSB) repair. The sequence is that of DNA ligase 4 (mus-53) from Neurospora crassa (strain ATCC 24698 / 74-OR23-1A / CBS 708.71 / DSM 1257 / FGSC 987).